The following is a 694-amino-acid chain: Elongation factor G (694 aa).

The tr-type G domain occupies 8-282 (KDYRNIGIMA…AVIDYLPSPV (275 aa)). GTP is bound by residues 17–24 (AHIDAGKT), 81–85 (DTPGH), and 135–138 (NKMD).

This sequence belongs to the TRAFAC class translation factor GTPase superfamily. Classic translation factor GTPase family. EF-G/EF-2 subfamily.

The protein localises to the cytoplasm. In terms of biological role, catalyzes the GTP-dependent ribosomal translocation step during translation elongation. During this step, the ribosome changes from the pre-translocational (PRE) to the post-translocational (POST) state as the newly formed A-site-bound peptidyl-tRNA and P-site-bound deacylated tRNA move to the P and E sites, respectively. Catalyzes the coordinated movement of the two tRNA molecules, the mRNA and conformational changes in the ribosome. This is Elongation factor G from Mesomycoplasma hyopneumoniae (strain J / ATCC 25934 / NCTC 10110) (Mycoplasma hyopneumoniae).